Here is a 44-residue protein sequence, read N- to C-terminus: Endochitinase 1 (44 aa).

The protein belongs to the glycosyl hydrolase 19 family. Chitinase class I subfamily.

It catalyses the reaction Random endo-hydrolysis of N-acetyl-beta-D-glucosaminide (1-&gt;4)-beta-linkages in chitin and chitodextrins.. Functionally, defense against chitin-containing fungal pathogens. The protein is Endochitinase 1 of Capsicum chinense (Scotch bonnet).